The sequence spans 227 residues: ATP synthase F(0) complex subunit a (227 aa).

6 consecutive transmembrane segments (helical) span residues 14–34, 69–89, 98–118, 139–159, 167–187, and 190–210; these read LLGHPLILLSLLLPALLFPSP, WALMLTSLMTMLLTINLLGLL, QLSMNMALAFPLWLATLLTGL, IPALILIETTSLLIRPLALGV, AGHLLIQLISTASIALKPILP, and SILTMAILLLLTILEVAVAMI.

It belongs to the ATPase A chain family. Component of the ATP synthase complex composed at least of ATP5F1A/subunit alpha, ATP5F1B/subunit beta, ATP5MC1/subunit c (homooctomer), MT-ATP6/subunit a, MT-ATP8/subunit 8, ATP5ME/subunit e, ATP5MF/subunit f, ATP5MG/subunit g, ATP5MK/subunit k, ATP5MJ/subunit j, ATP5F1C/subunit gamma, ATP5F1D/subunit delta, ATP5F1E/subunit epsilon, ATP5PF/subunit F6, ATP5PB/subunit b, ATP5PD/subunit d, ATP5PO/subunit OSCP. ATP synthase complex consists of a soluble F(1) head domain (subunits alpha(3) and beta(3)) - the catalytic core - and a membrane F(0) domain - the membrane proton channel (subunits c, a, 8, e, f, g, k and j). These two domains are linked by a central stalk (subunits gamma, delta, and epsilon) rotating inside the F1 region and a stationary peripheral stalk (subunits F6, b, d, and OSCP). Interacts with DNAJC30; interaction is direct.

The protein resides in the mitochondrion inner membrane. The enzyme catalyses H(+)(in) = H(+)(out). Functionally, subunit a, of the mitochondrial membrane ATP synthase complex (F(1)F(0) ATP synthase or Complex V) that produces ATP from ADP in the presence of a proton gradient across the membrane which is generated by electron transport complexes of the respiratory chain. ATP synthase complex consist of a soluble F(1) head domain - the catalytic core - and a membrane F(1) domain - the membrane proton channel. These two domains are linked by a central stalk rotating inside the F(1) region and a stationary peripheral stalk. During catalysis, ATP synthesis in the catalytic domain of F(1) is coupled via a rotary mechanism of the central stalk subunits to proton translocation. With the subunit c (ATP5MC1), forms the proton-conducting channel in the F(0) domain, that contains two crucial half-channels (inlet and outlet) that facilitate proton movement from the mitochondrial intermembrane space (IMS) into the matrix. Protons are taken up via the inlet half-channel and released through the outlet half-channel, following a Grotthuss mechanism. This is ATP synthase F(0) complex subunit a from Anas platyrhynchos (Mallard).